Reading from the N-terminus, the 98-residue chain is MMCGAPSATQPATAETQAIADKVKSQLEEKENKKFPVFKALEFKSQLVAGKNYFIKVQVDEDDFVHIRVFESLPHENKPVALTSYQTNKGRHDELTYF.

Methionine 1 is subject to N-acetylmethionine. The short motif at 46-50 (QLVAG) is the Secondary area of contact element.

Belongs to the cystatin family. As to quaternary structure, able to form dimers stabilized by noncovalent forces.

It is found in the cytoplasm. This is an intracellular thiol proteinase inhibitor. This chain is Cystatin-B (CSTB), found in Ovis aries (Sheep).